The primary structure comprises 205 residues: MSFRGGNRGGRGGFRGGFRGGRTGSARSFQQGPPDTVLEMGAFLHPCEGDIVCRSINTKIPYFNAPIYLENKTQVGKVDEILGPLNEVFFTIKCGDGVQATSFKEGDKFYIAADKLLPIERFLPKPKVVGPPKPKNKKKRSGAPGGRGGASMGRGGSRGGFRGGRGGSSFRGGRGGSSFRGGSRGGSFRGGSRGGSRGGFRGGRR.

Residues 1 to 23 (MSFRGGNRGGRGGFRGGFRGGRT) are compositionally biased toward gly residues. Positions 1–31 (MSFRGGNRGGRGGFRGGFRGGRTGSARSFQQ) are disordered. Residue Arg4 is modified to Asymmetric dimethylarginine; by HMT1. The segment at 4-21 (RGGNRGGRGGFRGGFRGG) is RGG-box 1. Position 8 is an asymmetric dimethylarginine; by HMT1; alternate (Arg8). Arg8 bears the Omega-N-methylarginine; by HMT1; alternate mark. Residue Arg11 is modified to Asymmetric dimethylarginine; by HMT1. Asymmetric dimethylarginine; by HMT1; alternate is present on Arg15. Arg15 is subject to Omega-N-methylarginine; by HMT1; alternate. Arg19 is modified (asymmetric dimethylarginine; by HMT1). Lys77 is covalently cross-linked (Glycyl lysine isopeptide (Lys-Gly) (interchain with G-Cter in ubiquitin)). Residues 124–205 (PKPKVVGPPK…SRGGFRGGRR (82 aa)) are disordered. The span at 143–205 (APGGRGGASM…SRGGFRGGRR (63 aa)) shows a compositional bias: gly residues. Asymmetric dimethylarginine; by HMT1; alternate occurs at positions 147, 154, and 158. Omega-N-methylarginine; by HMT1; alternate occurs at positions 147, 154, and 158. Residues 147–205 (RGGASMGRGGSRGGFRGGRGGSSFRGGRGGSSFRGGSRGGSFRGGSRGGSRGGFRGGRR) form an RGG-box 2 region. Arg162 carries the asymmetric dimethylarginine; by HMT1 modification. Arg165 is modified (asymmetric dimethylarginine; by HMT1; alternate). Residue Arg165 is modified to Omega-N-methylarginine; by HMT1; alternate. Arg171 and Arg174 each carry asymmetric dimethylarginine; by HMT1. Omega-N-methylarginine; by HMT1 is present on residues Arg180 and Arg184. Residue Arg189 is modified to Asymmetric dimethylarginine; by HMT1; alternate. At Arg189 the chain carries Omega-N-methylarginine; by HMT1; alternate. Asymmetric dimethylarginine; by HMT1 is present on residues Arg193, Arg197, and Arg201.

This sequence belongs to the GAR1 family. As to quaternary structure, component of the small nucleolar ribonucleoprotein particles containing H/ACA-type snoRNAs (H/ACA snoRNPs). The protein component of the H/ACA snoRNP contains CBF5, GAR1, NHP2 and NOP10. The complex contains a stable core composed of CBF5 and NOP10, to which GAR1 and NHP2 subsequently bind. Interacts with snoRNAs. Post-translationally, methylated by HMT1, forming asymmetric dimethylarginines (DMA) within a domain referred to as an RGG box, made up of repeated Gly-Gly dipeptides interspersed with Arg and aromatic residues.

The protein resides in the nucleus. The protein localises to the nucleolus. Functionally, non-catalytic component of the H/ACA small nucleolar ribonucleoprotein (H/ACA snoRNP), which catalyzes pseudouridylation of rRNA and is required for ribosome biogenesis. This involves the isomerization of uridine such that the ribose is subsequently attached to C5, instead of the normal N1. Pseudouridine ('psi') residues may serve to stabilize the conformation of rRNAs. The H/ACA snoRNP complex also mediates pseudouridylation of other types of RNAs. The H/ACA snoRNP complex mediates pseudouridylation at position 93 in U2 snRNA. Essential for growth. This is H/ACA ribonucleoprotein complex subunit GAR1 from Saccharomyces cerevisiae (strain ATCC 204508 / S288c) (Baker's yeast).